Reading from the N-terminus, the 340-residue chain is Replication factor C subunit 5 (340 aa).

Residue methionine 1 is modified to N-acetylmethionine. Glycine 60–threonine 67 lines the ATP pocket.

The protein belongs to the activator 1 small subunits family. In terms of assembly, subunit of the RFC complex, an heteropentameric complex consisting of a large subunit RFC1 and four small subunits RFC2, RFC3, RFC4 and RFC5; the RFC complex interacts with PCNA. Forms an heterotetrameric complex with RFC2, RFC3 and RFC4; this complex has ATPase activity but is not stimulated by PCNA. The heterotetramer of subunits RFC2, RFC3, RFC4 and RFC5 interacts with RAD17.

It is found in the nucleus. Its function is as follows. Subunit of the replication factor C (RFC) complex which acts during elongation of primed DNA templates by DNA polymerases delta and epsilon, and is necessary for ATP-dependent loading of proliferating cell nuclear antigen (PCNA) onto primed DNA. This is Replication factor C subunit 5 (RFC5) from Homo sapiens (Human).